A 360-amino-acid chain; its full sequence is Phospho-N-acetylmuramoyl-pentapeptide-transferase (360 aa).

The next 10 helical transmembrane spans lie at 26 to 46 (AILG…KLIE), 74 to 94 (MGGL…GDLG), 97 to 117 (YVWV…IDDY), 134 to 154 (YILQ…TAAN), 168 to 188 (VMPQ…VGAS), 199 to 219 (GLAI…AYLS), 236 to 256 (SGEL…FLWF), 263 to 283 (VFMG…IAVL), 288 to 308 (ILLV…ILQV), and 338 to 358 (VIVR…ATLK).

The protein belongs to the glycosyltransferase 4 family. MraY subfamily. The cofactor is Mg(2+).

It is found in the cell inner membrane. It catalyses the reaction UDP-N-acetyl-alpha-D-muramoyl-L-alanyl-gamma-D-glutamyl-meso-2,6-diaminopimeloyl-D-alanyl-D-alanine + di-trans,octa-cis-undecaprenyl phosphate = di-trans,octa-cis-undecaprenyl diphospho-N-acetyl-alpha-D-muramoyl-L-alanyl-D-glutamyl-meso-2,6-diaminopimeloyl-D-alanyl-D-alanine + UMP. Its pathway is cell wall biogenesis; peptidoglycan biosynthesis. Its function is as follows. Catalyzes the initial step of the lipid cycle reactions in the biosynthesis of the cell wall peptidoglycan: transfers peptidoglycan precursor phospho-MurNAc-pentapeptide from UDP-MurNAc-pentapeptide onto the lipid carrier undecaprenyl phosphate, yielding undecaprenyl-pyrophosphoryl-MurNAc-pentapeptide, known as lipid I. The polypeptide is Phospho-N-acetylmuramoyl-pentapeptide-transferase (Shewanella baltica (strain OS185)).